A 122-amino-acid chain; its full sequence is MKIILFLTLIALASSELYHYQECVRGTTVLLKEPCPSGTYEGNSPFHPLADNKFALTCISTHFAFACADGTRHTYQLRARSVSPKLFTRQEEVHQELYSPLFLIVAALVFIILCFTIKRKTE.

The signal sequence occupies residues 1-15 (MKIILFLTLIALASS). One can recognise an X4e domain in the interval 16–81 (ELYHYQECVR…RHTYQLRARS (66 aa)). Over 16 to 96 (ELYHYQECVR…FTRQEEVHQE (81 aa)) the chain is Virion surface. Cystine bridges form between C23–C58 and C35–C67. Residues 97-117 (LYSPLFLIVAALVFIILCFTI) form a helical membrane-spanning segment. Residues 118 to 122 (KRKTE) lie on the Intravirion side of the membrane. The Di-lysine motif signature appears at 118–122 (KRKTE).

Interacts with the spike glycoprotein, M protein, E protein and the accessory protein 3.

The protein resides in the virion. The protein localises to the host endoplasmic reticulum membrane. Its subcellular location is the host endoplasmic reticulum-Golgi intermediate compartment membrane. It localises to the host Golgi apparatus membrane. Functionally, non-structural protein which is dispensable for virus replication in cell culture. The chain is Protein 7a from Rhinolophus macrotis (Big-eared horseshoe bat).